A 436-amino-acid polypeptide reads, in one-letter code: Hydrogenobyrinate a,c-diamide synthase (436 aa).

One can recognise a GATase cobBQ-type domain in the interval 244 to 435; that stretch reads RIAVARDDAF…MHVIDFSGEA (192 aa). Cys327 acts as the Nucleophile in catalysis.

It belongs to the CobB/CbiA family. The cofactor is Mg(2+).

It catalyses the reaction hydrogenobyrinate + 2 L-glutamine + 2 ATP + 2 H2O = hydrogenobyrinate a,c-diamide + 2 L-glutamate + 2 ADP + 2 phosphate + 2 H(+). It participates in cofactor biosynthesis; adenosylcobalamin biosynthesis; cob(II)yrinate a,c-diamide from precorrin-2 (aerobic route): step 9/10. Catalyzes the ATP-dependent amidation of the two carboxylate groups at positions a and c of hydrogenobyrinate, using either L-glutamine or ammonia as the nitrogen source. The protein is Hydrogenobyrinate a,c-diamide synthase of Brucella abortus biovar 1 (strain 9-941).